Consider the following 93-residue polypeptide: Parbolysin P5 (93 aa).

Cystine bridges form between Cys-16-Cys-37, Cys-22-Cys-33, and Cys-47-Cys-60.

It belongs to the worm cytolysin family. As to expression, localized within the skin and proboscis and are most readily isolated from body mucus secretions.

It is found in the secreted. Its function is as follows. Cytolysin that shows hemolytic activity (on bovine erythrocytes, HC(50)=5.75 mg/ml). This hemolytic activity is completely inhibited by small unilamelar vesicles composed of PC/PG, PC/PI and PC/PS in 1:1 molar ratios (with at least 100 mg/ml concentration). The chain is Parbolysin P5 from Parborlasia corrugatus (Antarctic nemertean worm).